A 259-amino-acid polypeptide reads, in one-letter code: MNCSRDTGDELMAALLAEGINLILPPRDNIAPGDLIIADPQGGARLGGWHEVFNLQLSPEVATDPGFKSFQFRASSILQVGVAASVMGRVLQALGLGSGSFSSAFSSSNADTIQLSIVAPANKELTNFDAVLVQMNEAKAEPAQGYTDRNFFVVTKVWRARGIRISVADKSKKQVDLSAKAVEELTAKAKMELKREDTGSYAFLAASQLIFGLTLREVTYKDGAIVDVAPTGPLKFRGKGPGDPFAFIGDDAFVDLPES.

C3 carries the S-palmitoyl cysteine lipid modification. A run of 4 beta stranded transmembrane segments spans residues F70–V86, S98–S116, G162–A179, and A187–F203. The C-terminal region stretch occupies residues P244–S259.

The protein belongs to the bacterial gasdermin family. In terms of assembly, monomer in solution. Forms large, homooligomeric ring-shaped pores when inserted in membranes. In terms of processing, palmitoylation helps stabilize the inactive state; may self palmitoylate. Palmitoylation plays a significant role in pore formation.

The protein localises to the cytoplasm. It localises to the cell inner membrane. With respect to regulation, the full-length protein before cleavage is inactive: intramolecular interactions between the N-terminal domain and the C-terminal region as well as the lipid modification, mediate autoinhibition. The pyroptosis-like-inducing activity is carried by the released N-terminal domain (Gasdermin bGSDM, N-terminus). In terms of biological role, precursor of a pore-forming protein involved in defense against bacteriophages. Expression of bGSDM and the neighboring protease gene (Ga0098714_109514) is toxic in E.coli on solid medium. Cleavage of this precursor by its dedicated protease releases the active moiety (gasdermin bGSDM, N-terminus) which inserts into membranes, forming pores and triggering cell death. Pore-forming protein that causes membrane permeabilization via a pyroptosis-like activity. Makes ring-like pores when released. The polypeptide is Gasdermin bGSDM (Bradyrhizobium tropiciagri).